Here is a 196-residue protein sequence, read N- to C-terminus: Putative NADH dehydrogenase/NAD(P)H nitroreductase PXO_03909 (196 aa).

This sequence belongs to the nitroreductase family. HadB/RutE subfamily. FMN serves as cofactor.

In Xanthomonas oryzae pv. oryzae (strain PXO99A), this protein is Putative NADH dehydrogenase/NAD(P)H nitroreductase PXO_03909.